A 227-amino-acid polypeptide reads, in one-letter code: MAYPFQLGLQDATSPIMEELTNFHDHTLMIVFLISSLVLYIISLMLTTKLTHTSTMDAQEVETIWTILPAAILVLIALPSLRILYMMDEINNPVLTVKTMGHQWYWSYEYTDYEDLCFDSYMIPTNELKPGDLRLLEVDNRVVLPMELPIRMLISSEDVLHSWAVPSLGLKTDAIPGRLNQATVTSNRPGLFYGQCSEICGANHSFMPIVLEMVPLKHFENWSASMV.

The Mitochondrial intermembrane portion of the chain corresponds to M1–S14. The chain crosses the membrane as a helical span at residues P15–M45. Residues L46–Q59 lie on the Mitochondrial matrix side of the membrane. A helical transmembrane segment spans residues E60–M87. Residues D88–V227 lie on the Mitochondrial intermembrane side of the membrane. Positions 161, 196, 198, 200, 204, and 207 each coordinate Cu cation. E198 provides a ligand contact to Mg(2+).

This sequence belongs to the cytochrome c oxidase subunit 2 family. As to quaternary structure, component of the cytochrome c oxidase (complex IV, CIV), a multisubunit enzyme composed of 14 subunits. The complex is composed of a catalytic core of 3 subunits MT-CO1, MT-CO2 and MT-CO3, encoded in the mitochondrial DNA, and 11 supernumerary subunits COX4I, COX5A, COX5B, COX6A, COX6B, COX6C, COX7A, COX7B, COX7C, COX8 and NDUFA4, which are encoded in the nuclear genome. The complex exists as a monomer or a dimer and forms supercomplexes (SCs) in the inner mitochondrial membrane with NADH-ubiquinone oxidoreductase (complex I, CI) and ubiquinol-cytochrome c oxidoreductase (cytochrome b-c1 complex, complex III, CIII), resulting in different assemblies (supercomplex SCI(1)III(2)IV(1) and megacomplex MCI(2)III(2)IV(2)). Found in a complex with TMEM177, COA6, COX18, COX20, SCO1 and SCO2. Interacts with TMEM177 in a COX20-dependent manner. Interacts with COX20. Interacts with COX16. It depends on Cu cation as a cofactor.

The protein resides in the mitochondrion inner membrane. The enzyme catalyses 4 Fe(II)-[cytochrome c] + O2 + 8 H(+)(in) = 4 Fe(III)-[cytochrome c] + 2 H2O + 4 H(+)(out). Its function is as follows. Component of the cytochrome c oxidase, the last enzyme in the mitochondrial electron transport chain which drives oxidative phosphorylation. The respiratory chain contains 3 multisubunit complexes succinate dehydrogenase (complex II, CII), ubiquinol-cytochrome c oxidoreductase (cytochrome b-c1 complex, complex III, CIII) and cytochrome c oxidase (complex IV, CIV), that cooperate to transfer electrons derived from NADH and succinate to molecular oxygen, creating an electrochemical gradient over the inner membrane that drives transmembrane transport and the ATP synthase. Cytochrome c oxidase is the component of the respiratory chain that catalyzes the reduction of oxygen to water. Electrons originating from reduced cytochrome c in the intermembrane space (IMS) are transferred via the dinuclear copper A center (CU(A)) of subunit 2 and heme A of subunit 1 to the active site in subunit 1, a binuclear center (BNC) formed by heme A3 and copper B (CU(B)). The BNC reduces molecular oxygen to 2 water molecules using 4 electrons from cytochrome c in the IMS and 4 protons from the mitochondrial matrix. This is Cytochrome c oxidase subunit 2 (MT-CO2) from Uromys caudimaculatus (Giant white-tailed rat).